Reading from the N-terminus, the 1359-residue chain is ABC transporter C family member 1 (1359 aa).

In terms of domain architecture, ABC transmembrane type-1 1 spans asparagine 111–serine 394. 6 consecutive transmembrane segments (helical) span residues isoleucine 119 to isoleucine 139, serine 147 to phenylalanine 167, leucine 214 to phenylalanine 234, leucine 244 to isoleucine 264, methionine 332 to leucine 352, and isoleucine 363 to leucine 383. The segment at proline 409–glutamine 478 is disordered. Residues glutamate 420–serine 433 show a composition bias toward acidic residues. The segment covering histidine 440 to aspartate 450 has biased composition (polar residues). A compositionally biased stretch (low complexity) spans glycine 459–glutamine 478. The region spanning glutamine 470–lysine 690 is the ABC transporter 1 domain. Glycine 502–threonine 509 contacts ATP. Positions leucine 763–arginine 1061 constitute an ABC transmembrane type-1 2 domain. Transmembrane regions (helical) follow at residues glycine 773–tyrosine 793, isoleucine 819–alanine 839, valine 884–valine 904, isoleucine 906–isoleucine 926, and tryptophan 999–phenylalanine 1021. Residues asparagine 1073 to aspartate 1102 adopt a coiled-coil conformation. One can recognise an ABC transporter 2 domain in the interval isoleucine 1116–lysine 1350. Position 1150–1157 (glycine 1150–serine 1157) interacts with ATP.

The protein belongs to the ABC transporter superfamily. ABCC family. Conjugate transporter (TC 3.A.1.208) subfamily.

The protein localises to the membrane. This chain is ABC transporter C family member 1 (abcC1), found in Dictyostelium discoideum (Social amoeba).